The chain runs to 395 residues: Multidrug resistance protein MdtL (395 aa).

At 1 to 3 (MKR) the chain is on the cytoplasmic side. A helical membrane pass occupies residues 4 to 24 (FLLCSFALVLLYPAGIDMYLV). Topologically, residues 25–41 (GLPRIAADLNASEAQLH) are periplasmic. The chain crosses the membrane as a helical span at residues 42–62 (IAFSVYLAGMATAMLFAGKIA). The Cytoplasmic segment spans residues 63–68 (DQSGRK). The helical transmembrane segment at 69-89 (PVAIVGAIVFMMASLLCSRAS) threads the bilayer. Residues 90 to 92 (EGS) are Periplasmic-facing. The chain crosses the membrane as a helical span at residues 93-113 (LFLSGRFLQGVGAGGCYVVAF). The Cytoplasmic segment spans residues 114 to 130 (AILRDTLDEHRRAKVLS). The chain crosses the membrane as a helical span at residues 131–151 (LLNGITCIVPVLAPVMGHLIM). Over 152-157 (LRFPWQ) the chain is Periplasmic. The chain crosses the membrane as a helical span at residues 158–178 (SLFYTMSTMGIMVGLLSLFIL). Over 179 to 216 (RETRPARLAPRDLSPSSSAAESLVNRFFVSRLAITTLS) the chain is Cytoplasmic. Residues 217–237 (VSVILTFVNASPVLLMEVMGF) traverse the membrane as a helical segment. The Periplasmic segment spans residues 238 to 246 (SRGDYAITM). The chain crosses the membrane as a helical span at residues 247–267 (ALTAGVSMVVSFSTPFALGLF). Residues 268-270 (KPR) lie on the Cytoplasmic side of the membrane. Residues 271–291 (TLMLVSQGLFLTAGVTLSLAH) form a helical membrane-spanning segment. At 292–294 (TNT) the chain is on the periplasmic side. The chain crosses the membrane as a helical span at residues 295–315 (VTLFGLTLICAGFSVGFGVAM). Residues 316-332 (SQALGPFSLRAGVASST) are Cytoplasmic-facing. Residues 333–353 (LGIAQVCGSSLWIWLAAILGI) form a helical membrane-spanning segment. The Periplasmic portion of the chain corresponds to 354-357 (SAMN). Residues 358–378 (MLIGILIGCSIVSILLIFSVA) form a helical membrane-spanning segment. At 379 to 395 (PNRSVAEHEEIPYQSRS) the chain is on the cytoplasmic side.

This sequence belongs to the major facilitator superfamily. DHA1 family. MdtL (TC 2.A.1.2.22) subfamily.

The protein resides in the cell inner membrane. This Salmonella typhi protein is Multidrug resistance protein MdtL (mdtL).